Consider the following 262-residue polypeptide: Small ribosomal subunit protein uS2 (262 aa).

It belongs to the universal ribosomal protein uS2 family.

The chain is Small ribosomal subunit protein uS2 from Borreliella burgdorferi (strain ZS7) (Borrelia burgdorferi).